The chain runs to 536 residues: Small conductance calcium-activated potassium channel protein 1 (536 aa).

The tract at residues 1–90 (MSSRSHNGSV…KPPTVSHRLG (90 aa)) is disordered. Positions 65 to 75 (QEEEEEEEDED) are enriched in acidic residues. Residues 107-127 (LIFGMFGIVVMVTETELSWGV) form a helical membrane-spanning segment. A helical transmembrane segment spans residues 136–156 (FALKCLISLSTVILLGLVILY). Residues 224-244 (VLLSIPMFLRLYLLARVMLLH) traverse the membrane as a helical segment. Residues 273 to 293 (LMTICPGTVLLVFSISSWIVA) form a helical membrane-spanning segment. A helical membrane pass occupies residues 313–333 (FLGAMWLISITFLSIGYGDMV). An intramembrane region (pore-forming) is located at residues 342 to 362 (VCLLTGIMGAGCTALVVAVVA). A calmodulin-binding region spans residues 380-459 (DTQLTKRVKN…LADLAKAQSI (80 aa)). A helical membrane pass occupies residues 487–507 (VLGASLQALPSLIAQAICPLP). Positions 514–536 (SHLTTAAQSPQSHWLPTTASDCG) are disordered. The span at 515 to 536 (HLTTAAQSPQSHWLPTTASDCG) shows a compositional bias: polar residues.

This sequence belongs to the potassium channel KCNN family. KCa2.1/KCNN1 subfamily. Homodimer. Heteromultimer with KCNN2 and KCNN3. The complex is composed of 4 channel subunits each of which binds to a calmodulin subunit which regulates the channel activity through calcium-binding. Interacts with calmodulin. In terms of tissue distribution, widely expressed including brain.

The protein resides in the membrane. The protein localises to the cytoplasm. Its subcellular location is the myofibril. It is found in the sarcomere. It localises to the z line. It carries out the reaction K(+)(in) = K(+)(out). Its activity is regulated as follows. Inhibited by bee venom neurotoxin apamin. Inhibited by d-tubocurarine and tetraethylammonium (TEA). In terms of biological role, small conductance calcium-activated potassium channel that mediates the voltage-independent transmembrane transfer of potassium across the cell membrane through a constitutive interaction with calmodulin which binds the intracellular calcium allowing its opening. The current is characterized by a voltage-independent activation, an intracellular calcium concentration increase-dependent activation and a single-channel conductance of about 3 picosiemens. Also presents an inwardly rectifying current, thus reducing its already small outward conductance of potassium ions, which is particularly the case when the membrane potential displays positive values, above + 20 mV. Activation is followed by membrane hyperpolarization. Thought to regulate neuronal excitability by contributing to the slow component of synaptic afterhyperpolarization. This is Small conductance calcium-activated potassium channel protein 1 from Rattus norvegicus (Rat).